Consider the following 306-residue polypeptide: Anamorsin homolog (306 aa).

The span at 1-25 shows a compositional bias: basic and acidic residues; the sequence is MVPPREDVTVRIVCERRRTAGKEAR. Residues 1 to 51 are disordered; it reads MVPPREDVTVRIVCERRRTAGKEARPPPSAKPTPGNTSSHPNAKETHRSNE. Residues 59-190 form an N-terminal SAM-like domain region; that stretch reads KQSHRRSIMA…RRNNTTNSVA (132 aa). Residues 191 to 218 are linker; that stretch reads TLNFASNNNNGNDLLIDEDNLLTDASNL. [2Fe-2S] cluster contacts are provided by Cys-236, Cys-242, Cys-245, and Cys-247. Positions 236–247 are fe-S binding site A; it reads CSGRAPCDDCTC. Positions 252 to 265 are enriched in basic and acidic residues; that stretch reads GAKEGNSEQPKEIK. Residues 252-272 are disordered; it reads GAKEGNSEQPKEIKSSSCGKC. Residues Cys-269, Cys-272, Cys-280, and Cys-283 each contribute to the [4Fe-4S] cluster site. 2 consecutive short sequence motifs (cx2C motif) follow at residues 269 to 272 and 280 to 283; these read CGKC and CASC. A fe-S binding site B region spans residues 269-283; it reads CGKCSLGDAFRCASC.

It belongs to the anamorsin family. In terms of assembly, monomer. [2Fe-2S] cluster serves as cofactor. [4Fe-4S] cluster is required as a cofactor.

The protein localises to the cytoplasm. It localises to the mitochondrion intermembrane space. Its function is as follows. Component of the cytosolic iron-sulfur (Fe-S) protein assembly (CIA) machinery. Required for the maturation of extramitochondrial Fe-S proteins. Part of an electron transfer chain functioning in an early step of cytosolic Fe-S biogenesis, facilitating the de novo assembly of a [4Fe-4S] cluster on the cytosolic Fe-S scaffold complex. Electrons are transferred from NADPH via a FAD- and FMN-containing diflavin oxidoreductase. Together with the diflavin oxidoreductase, also required for the assembly of the diferric tyrosyl radical cofactor of ribonucleotide reductase (RNR), probably by providing electrons for reduction during radical cofactor maturation in the catalytic small subunit. The chain is Anamorsin homolog from Phaeodactylum tricornutum (strain CCAP 1055/1).